The following is a 918-amino-acid chain: Leucine--tRNA ligase (918 aa).

Residues 40–51 (PYPSGVGLHVGH) carry the 'HIGH' region motif. A 'KMSKS' region motif is present at residues 692 to 696 (KMSKS). Position 695 (Lys695) interacts with ATP.

Belongs to the class-I aminoacyl-tRNA synthetase family.

It localises to the cytoplasm. It carries out the reaction tRNA(Leu) + L-leucine + ATP = L-leucyl-tRNA(Leu) + AMP + diphosphate. The polypeptide is Leucine--tRNA ligase (Azobacteroides pseudotrichonymphae genomovar. CFP2).